A 548-amino-acid polypeptide reads, in one-letter code: Serine/threonine-protein phosphatase 2A 56 kDa regulatory subunit delta 1 isoform (548 aa).

Residues Met-1–Ser-10 show a composition bias toward basic residues. Residues Met-1–Thr-75 form a disordered region. Over residues Lys-27–Lys-39 the composition is skewed to basic and acidic residues. Tyr-96 carries the post-translational modification Phosphotyrosine. Ser-99, Ser-109, and Ser-542 each carry phosphoserine.

This sequence belongs to the phosphatase 2A regulatory subunit B family. In terms of assembly, PP2A consists of a common heterodimeric core enzyme, composed of a 36 kDa catalytic subunit (subunit C) and a 65 kDa constant regulatory subunit (PR65 or subunit A), that associates with a variety of regulatory subunits. Proteins that associate with the core dimer include three families of regulatory subunits B (the R2/B/PR55/B55, R3/B''/PR72/PR130/PR59 and R5/B'/B56 families), the 48 kDa variable regulatory subunit, viral proteins, and cell signaling molecules.

Its subcellular location is the cytoplasm. It localises to the nucleus. The B regulatory subunit might modulate substrate selectivity and catalytic activity, and might also direct the localization of the catalytic enzyme to a particular subcellular compartment. Has a role in cell shape control and septum formation. This Schizosaccharomyces pombe (strain 972 / ATCC 24843) (Fission yeast) protein is Serine/threonine-protein phosphatase 2A 56 kDa regulatory subunit delta 1 isoform (par1).